Here is a 125-residue protein sequence, read N- to C-terminus: MORF4 family-associated protein 1 (125 aa).

Positions 76–99 (ESALNHLQGAGGAEPRGPRAEKAD) are disordered. The stretch at 94–124 (RAEKADEKAQEMAKMAEMLVQLVRRIEKSES) forms a coiled coil.

Belongs to the MORF4 family-associated protein family. In terms of assembly, found in a complex composed of MORF4L1, MRFAP1 and RB1. Interacts via its N-terminus with MORF4L1. Interacts with CSTB and MORF4L2. In terms of tissue distribution, widely expressed in all tissues examined and as early as 7 days during embryonic development.

Its subcellular location is the nucleus. The protein localises to the cytoplasm. The protein resides in the perinuclear region. The polypeptide is MORF4 family-associated protein 1 (Mus musculus (Mouse)).